The primary structure comprises 261 residues: Flagellar L-ring protein (261 aa).

The N-terminal stretch at M1–G15 is a signal peptide. Residue C16 is the site of N-palmitoyl cysteine attachment. C16 carries the S-diacylglycerol cysteine lipid modification. Positions K121–S133 are enriched in basic and acidic residues. Positions K121 to V140 are disordered.

Belongs to the FlgH family. As to quaternary structure, the basal body constitutes a major portion of the flagellar organelle and consists of four rings (L,P,S, and M) mounted on a central rod.

The protein resides in the cell outer membrane. It localises to the bacterial flagellum basal body. Its function is as follows. Assembles around the rod to form the L-ring and probably protects the motor/basal body from shearing forces during rotation. This Aliivibrio salmonicida (strain LFI1238) (Vibrio salmonicida (strain LFI1238)) protein is Flagellar L-ring protein.